Consider the following 104-residue polypeptide: Small ribosomal subunit protein bS6c (104 aa).

It belongs to the bacterial ribosomal protein bS6 family.

Its subcellular location is the plastid. It localises to the cyanelle. Its function is as follows. Binds together with bS18 to 16S ribosomal RNA. In Cyanophora paradoxa, this protein is Small ribosomal subunit protein bS6c (rps6).